The primary structure comprises 455 residues: Trigger factor (455 aa).

The PPIase FKBP-type domain maps to 169–262 (GDVAIVDYEG…VKELKAKELP (94 aa)).

It belongs to the FKBP-type PPIase family. Tig subfamily.

It localises to the cytoplasm. The catalysed reaction is [protein]-peptidylproline (omega=180) = [protein]-peptidylproline (omega=0). In terms of biological role, involved in protein export. Acts as a chaperone by maintaining the newly synthesized protein in an open conformation. Functions as a peptidyl-prolyl cis-trans isomerase. The polypeptide is Trigger factor (Rippkaea orientalis (strain PCC 8801 / RF-1) (Cyanothece sp. (strain PCC 8801))).